A 682-amino-acid chain; its full sequence is Potassium-transporting ATPase ATP-binding subunit (682 aa).

Helical transmembrane passes span 34–54 (PVMF…IAMA), 62–82 (ALFS…ANFA), 219–239 (IALT…TATL), and 254–274 (VLVA…LSAI). Catalysis depends on D307, which acts as the 4-aspartylphosphate intermediate. ATP-binding positions include D344, E348, 377 to 384 (FTAQSRMS), and K395. 2 residues coordinate Mg(2+): D518 and D522. A run of 3 helical transmembrane segments spans residues 588-608 (FAII…LNIM), 616-636 (AILS…PLAL), and 662-682 (LLVP…CGLV).

This sequence belongs to the cation transport ATPase (P-type) (TC 3.A.3) family. Type IA subfamily. As to quaternary structure, the system is composed of three essential subunits: KdpA, KdpB and KdpC.

Its subcellular location is the cell inner membrane. The enzyme catalyses K(+)(out) + ATP + H2O = K(+)(in) + ADP + phosphate + H(+). In terms of biological role, part of the high-affinity ATP-driven potassium transport (or Kdp) system, which catalyzes the hydrolysis of ATP coupled with the electrogenic transport of potassium into the cytoplasm. This subunit is responsible for energy coupling to the transport system and for the release of the potassium ions to the cytoplasm. The polypeptide is Potassium-transporting ATPase ATP-binding subunit (Escherichia coli O81 (strain ED1a)).